Reading from the N-terminus, the 491-residue chain is ATP synthase subunit beta, chloroplastic (491 aa).

163–170 (GGAGVGKT) provides a ligand contact to ATP.

It belongs to the ATPase alpha/beta chains family. As to quaternary structure, F-type ATPases have 2 components, CF(1) - the catalytic core - and CF(0) - the membrane proton channel. CF(1) has five subunits: alpha(3), beta(3), gamma(1), delta(1), epsilon(1). CF(0) has four main subunits: a(1), b(1), b'(1) and c(9-12).

It localises to the plastid. The protein resides in the chloroplast thylakoid membrane. It carries out the reaction ATP + H2O + 4 H(+)(in) = ADP + phosphate + 5 H(+)(out). In terms of biological role, produces ATP from ADP in the presence of a proton gradient across the membrane. The catalytic sites are hosted primarily by the beta subunits. The polypeptide is ATP synthase subunit beta, chloroplastic (Nephroselmis olivacea (Green alga)).